Here is a 443-residue protein sequence, read N- to C-terminus: Glutamyl-tRNA reductase (443 aa).

Substrate-binding positions include 49 to 52, serine 109, 114 to 116, and glutamine 120; these read TCNR and ETQ. Cysteine 50 serves as the catalytic Nucleophile. 189–194 is an NADP(+) binding site; sequence GAGKMG.

Belongs to the glutamyl-tRNA reductase family. As to quaternary structure, homodimer.

The enzyme catalyses (S)-4-amino-5-oxopentanoate + tRNA(Glu) + NADP(+) = L-glutamyl-tRNA(Glu) + NADPH + H(+). It participates in porphyrin-containing compound metabolism; protoporphyrin-IX biosynthesis; 5-aminolevulinate from L-glutamyl-tRNA(Glu): step 1/2. Catalyzes the NADPH-dependent reduction of glutamyl-tRNA(Glu) to glutamate 1-semialdehyde (GSA). The sequence is that of Glutamyl-tRNA reductase from Bacillus mycoides (strain KBAB4) (Bacillus weihenstephanensis).